Reading from the N-terminus, the 422-residue chain is 5'-deoxyadenosine deaminase (422 aa).

The Zn(2+) site is built by histidine 57 and histidine 59. Residues glutamate 86 and histidine 178 each coordinate substrate. Histidine 205 lines the Zn(2+) pocket. 2 residues coordinate substrate: glutamate 208 and aspartate 294. Aspartate 294 serves as a coordination point for Zn(2+).

This sequence belongs to the metallo-dependent hydrolases superfamily. MTA/SAH deaminase family. Homotetramer. It depends on Zn(2+) as a cofactor.

It catalyses the reaction 5'-deoxyadenosine + H2O + H(+) = 5'-deoxyinosine + NH4(+). It carries out the reaction S-adenosyl-L-homocysteine + H2O + H(+) = S-inosyl-L-homocysteine + NH4(+). The catalysed reaction is S-methyl-5'-thioadenosine + H2O + H(+) = S-methyl-5'-thioinosine + NH4(+). The enzyme catalyses adenosine + H2O + H(+) = inosine + NH4(+). It participates in amino-acid biosynthesis; S-adenosyl-L-methionine biosynthesis. Catalyzes the deamination of three SAM-derived enzymatic products, namely 5'-deoxyadenosine, S-adenosyl-L-homocysteine, and 5'-methylthioadenosine, to produce the inosine analogs. Can also deaminate adenosine. The preferred substrate for this enzyme is 5'-deoxyadenosine, but all these substrates are efficiently deaminated. Likely functions in a S-adenosyl-L-methionine (SAM) recycling pathway from S-adenosyl-L-homocysteine (SAH) produced from SAM-dependent methylation reactions. May also be involved in the recycling of 5'-deoxyadenosine, whereupon the 5'-deoxyribose moiety of 5'-deoxyinosine is further metabolized to deoxyhexoses used for the biosynthesis of aromatic amino acids in methanogens. The protein is 5'-deoxyadenosine deaminase of Methanococcus maripaludis (strain C7 / ATCC BAA-1331).